Reading from the N-terminus, the 613-residue chain is Thymidine kinase (613 aa).

2 disordered regions span residues 1-233 and 253-276; these read MAEG…GVKS and SDGE…ATPR. The segment covering 8 to 18 has biased composition (low complexity); that stretch reads FSSSSTSSEEA. Residues 78–88 are compositionally biased toward basic and acidic residues; sequence PKNEPRPERGK. A compositionally biased stretch (basic residues) spans 114-126; the sequence is LGSRTRSKSRSRD. Basic and acidic residues predominate over residues 199–218; sequence HRYDKPSYDEEVCQKKDKGG. 301–308 serves as a coordination point for ATP; sequence GSMGVGKT. Catalysis depends on glutamate 327, which acts as the Proton acceptor. 3 residues coordinate substrate: tyrosine 344, glutamine 365, and arginine 461.

The protein belongs to the herpesviridae thymidine kinase family. As to quaternary structure, homodimer.

The catalysed reaction is thymidine + ATP = dTMP + ADP + H(+). Functionally, catalyzes the transfer of the gamma-phospho group of ATP to thymidine to generate dTMP in the salvage pathway of pyrimidine synthesis. The dTMP serves as a substrate for DNA polymerase during viral DNA replication. Allows the virus to be reactivated and to grow in non-proliferative cells lacking a high concentration of phosphorylated nucleic acid precursors. The protein is Thymidine kinase of Equine herpesvirus 2 (strain 86/87) (EHV-2).